We begin with the raw amino-acid sequence, 567 residues long: Major facilitator superfamily transporter MG061 (567 aa).

The next 12 membrane-spanning stretches (helical) occupy residues 15 to 35 (ITLW…WFVI), 78 to 98 (WTIT…VLKF), 104 to 124 (VLIM…GDPL), 193 to 213 (GYAL…TLVV), 230 to 250 (ILSN…FTPF), 264 to 284 (VYIM…FLWF), 321 to 341 (LIGV…PAWF), 363 to 383 (TGLA…FVVF), 405 to 425 (IVVL…SAAG), 426 to 446 (FALI…LSSS), 462 to 482 (LPIL…LFDI), and 503 to 523 (PGVI…NLIV).

It belongs to the major facilitator superfamily.

The protein resides in the cell membrane. This Mycoplasma genitalium (strain ATCC 33530 / DSM 19775 / NCTC 10195 / G37) (Mycoplasmoides genitalium) protein is Major facilitator superfamily transporter MG061.